The chain runs to 325 residues: MTFAKISQAAYYVPSQVVTNDDLSKIMDTSDEWITSRTGIRERRISQSEDTSDLASQVAKELLKKASLKAKEIDFIIVATITPDAMMPSTAACVQAKIGAVNAFAFDLTAACSGFIFALSAAEKMIKSGQYQKGLVIGAEVLSKIIDWSDRTTAVLFGDGAGGVLLEADSSEHFLFESIHSDGSRGESLTSGEHAVSSPFSQVDKKDNCFLKMDGRAIFDFAIRDVSKSISMLIRKSDMPVEAIDYFLLHQANIRILDKMAKKIGADREKFPANMMKYGNTSAASIPILLAECVENGTIELNGSHTVLLSGFGGGLTWGSLIVKI.

Catalysis depends on residues Cys-112 and His-250. An ACP-binding region spans residues 251 to 255 (QANIR). Asn-280 is a catalytic residue.

Belongs to the thiolase-like superfamily. FabH family. In terms of assembly, homodimer.

It is found in the cytoplasm. The catalysed reaction is malonyl-[ACP] + acetyl-CoA + H(+) = 3-oxobutanoyl-[ACP] + CO2 + CoA. The protein operates within lipid metabolism; fatty acid biosynthesis. Its function is as follows. Catalyzes the condensation reaction of fatty acid synthesis by the addition to an acyl acceptor of two carbons from malonyl-ACP. Catalyzes the first condensation reaction which initiates fatty acid synthesis and may therefore play a role in governing the total rate of fatty acid production. Possesses both acetoacetyl-ACP synthase and acetyl transacylase activities. Its substrate specificity determines the biosynthesis of branched-chain and/or straight-chain of fatty acids. The protein is Beta-ketoacyl-[acyl-carrier-protein] synthase III of Streptococcus mutans serotype c (strain ATCC 700610 / UA159).